The following is a 603-amino-acid chain: Isovalerate--CoA ligase AAE2 (603 aa).

This sequence belongs to the ATP-dependent AMP-binding enzyme family. Expressed at low levels in leaves, flowers and developing seeds.

It carries out the reaction 3-methylbutanoate + ATP + CoA = 3-methylbutanoyl-CoA + AMP + diphosphate. It catalyses the reaction hexanoate + ATP + CoA = hexanoyl-CoA + AMP + diphosphate. The catalysed reaction is butanoate + ATP + CoA = butanoyl-CoA + AMP + diphosphate. The enzyme catalyses pentanoate + ATP + CoA = pentanoyl-CoA + AMP + diphosphate. It carries out the reaction 3-methylpentanoate + ATP + CoA = 3-methylpentanoyl-CoA + AMP + diphosphate. It catalyses the reaction 4-methylpentanoate + ATP + CoA = 4-methylpentanoyl-CoA + AMP + diphosphate. Functionally, catalyzes the ligation of CoA on isovalerate to produce 3-methylbutanoyl-CoA. Can also use butanoate, pentanoate, hexanoate, 3-methylpentanoate and 4-methylpentanoate as substrates with a lower efficiency. The sequence is that of Isovalerate--CoA ligase AAE2 from Arabidopsis thaliana (Mouse-ear cress).